Reading from the N-terminus, the 712-residue chain is T-box transcription factor TBX2 (712 aa).

The T-box DNA-binding region spans 109-287 (LEAKELWDQF…NNPFAKGFRD (179 aa)). Positions 313–450 (PERDGAESDA…EGKEQGLAPL (138 aa)) are disordered. Residues 326–336 (DPPPAREPPTS) show a composition bias toward pro residues. Phosphoserine is present on residues Ser-336, Ser-342, and Ser-360. Composition is skewed to basic and acidic residues over residues 363–372 (EPERLSEERA), 391–409 (TEPE…KEPA), and 421–444 (SLEK…EGKE). Positions 518-601 (GGNGGGGGPG…ATSAAAAAAA (84 aa)) are repression domain 1 (RD1). A phosphoserine mark is found at Ser-622, Ser-653, Ser-657, and Ser-676. Residues 637 to 687 (LTTGLASEGSKAAGGNSREPSPLPELALRKVGAPSRGALSPSGSAKEAANE) form a disordered region.

In terms of assembly, binds DNA as a monomer. Interacts with PML (isoform PML-2, isoform PML-3 and isoform PML-4). In terms of tissue distribution, expressed primarily in adult in kidney, lung, and placenta. Weak expression in heart and ovary.

Its subcellular location is the nucleus. Transcription factor which acts as a transcriptional repressor. May also function as a transcriptional activator. Binds to the palindromic T site 5'-TTCACACCTAGGTGTGAA-3' DNA sequence, or a half-site, which are present in the regulatory region of several genes. Required for cardiac atrioventricular canal formation. May cooperate with NKX2.5 to negatively modulate expression of NPPA/ANF in the atrioventricular canal. May play a role as a positive regulator of TGFB2 expression, perhaps acting in concert with GATA4 in the developing outflow tract myocardium. Plays a role in limb pattern formation. Acts as a transcriptional repressor of ADAM10 gene expression, perhaps in concert with histone deacetylase HDAC1 as cofactor. Involved in branching morphogenesis in both developing lungs and adult mammary glands, via negative modulation of target genes; acting redundantly with TBX3. Required, together with TBX3, to maintain cell proliferation in the embryonic lung mesenchyme; perhaps acting downstream of SHH, BMP and TGFbeta signaling. Involved in modulating early inner ear development, acting independently of, and also redundantly with TBX3, in different subregions of the developing ear. Acts as a negative regulator of PML function in cellular senescence. Acts as a negative regulator of expression of CDKN1A/p21, IL33 and CCN4; repression of CDKN1A is enhanced in response to UV-induced stress, perhaps as a result of phosphorylation by p38 MAPK. Negatively modulates expression of CDKN2A/p14ARF and CDH1/E-cadherin. Plays a role in induction of the epithelial-mesenchymal transition (EMT). Plays a role in melanocyte proliferation, perhaps via regulation of cyclin CCND1. Involved in melanogenesis, acting via negative modulation of expression of DHICA oxidase/TYRP1 and P protein/OCA2. Involved in regulating retinal pigment epithelium (RPE) cell proliferation, perhaps via negatively modulating transcription of the transcription factor CEBPD. The protein is T-box transcription factor TBX2 (TBX2) of Homo sapiens (Human).